The primary structure comprises 37 residues: Large ribosomal subunit protein bL36 (37 aa).

The protein belongs to the bacterial ribosomal protein bL36 family.

In Polaromonas naphthalenivorans (strain CJ2), this protein is Large ribosomal subunit protein bL36.